A 488-amino-acid polypeptide reads, in one-letter code: 1-aminocyclopropane-1-carboxylate synthase-like protein 1 (488 aa).

N6-(pyridoxal phosphate)lysine is present on Lys-273.

It belongs to the class-I pyridoxal-phosphate-dependent aminotransferase family. Homodimer. Expressed in young leaves and flowers. Not expressed in roots.

This Arabidopsis thaliana (Mouse-ear cress) protein is 1-aminocyclopropane-1-carboxylate synthase-like protein 1 (ACS1).